The following is a 207-amino-acid chain: Guanylate kinase (207 aa).

In terms of domain architecture, Guanylate kinase-like spans 5–185 (GFVLLISGPS…SYEALRAILI (181 aa)). 12–19 (GPSGAGKS) provides a ligand contact to ATP.

The protein belongs to the guanylate kinase family.

It localises to the cytoplasm. It catalyses the reaction GMP + ATP = GDP + ADP. Functionally, essential for recycling GMP and indirectly, cGMP. The polypeptide is Guanylate kinase (gmk) (Campylobacter jejuni subsp. jejuni serotype O:2 (strain ATCC 700819 / NCTC 11168)).